The chain runs to 291 residues: Ribonuclease Z (291 aa).

H61, H63, D65, H66, H133, D201, and H257 together coordinate Zn(2+). Catalysis depends on D65, which acts as the Proton acceptor.

Belongs to the RNase Z family. Homodimer. Requires Zn(2+) as cofactor.

It carries out the reaction Endonucleolytic cleavage of RNA, removing extra 3' nucleotides from tRNA precursor, generating 3' termini of tRNAs. A 3'-hydroxy group is left at the tRNA terminus and a 5'-phosphoryl group is left at the trailer molecule.. Functionally, zinc phosphodiesterase, which displays some tRNA 3'-processing endonuclease activity. Probably involved in tRNA maturation, by removing a 3'-trailer from precursor tRNA. The protein is Ribonuclease Z of Saccharolobus islandicus (strain Y.N.15.51 / Yellowstone #2) (Sulfolobus islandicus).